The primary structure comprises 554 residues: Putative F-box/LRR-repeat protein 8 (554 aa).

The F-box domain occupies 71–117 (YDYISNLPDECLSLIFQSLTCADLKRCSLVCRRWLTIEGQCRHRLSL). LRR repeat units lie at residues 119–144 (AQSDLISVIPSLFTRFDSVTKLVLRS), 148–173 (SLGICDNAFVMISVRCRNLTRLKLRG), 174–199 (CPEISDLGIIGFTENCRSLKKVSFGS), 205–224 (KGMNALLNTCLGLEELSVKR), 250–275 (KELHNGQCFAPLLSGAKGLRILKIFR), 301–325 (RIQMSDLGLTALSKCSGVEVLHLVK), 326–351 (TPDCTNVGLALVAERCKLLRKLHIDG), 354–379 (TNRIGDEGLIVVAKYCWNLQELVLIG), 383–404 (TKLSLEAIVSNCLNLERLALCG), 405–428 (SDTVGDTELCCIAEKCLALRKLCI), 430–455 (NCPITDDGIKALGNGCPNLLKVKVKK), and 456–480 (CRGVTTQGADLLRKRRALLVVNLDA).

The protein is Putative F-box/LRR-repeat protein 8 (FBL8) of Arabidopsis thaliana (Mouse-ear cress).